The primary structure comprises 140 residues: ATP synthase epsilon chain (140 aa).

The protein belongs to the ATPase epsilon chain family. As to quaternary structure, F-type ATPases have 2 components, CF(1) - the catalytic core - and CF(0) - the membrane proton channel. CF(1) has five subunits: alpha(3), beta(3), gamma(1), delta(1), epsilon(1). CF(0) has three main subunits: a, b and c.

The protein resides in the cell inner membrane. Produces ATP from ADP in the presence of a proton gradient across the membrane. This chain is ATP synthase epsilon chain, found in Bordetella bronchiseptica (strain ATCC BAA-588 / NCTC 13252 / RB50) (Alcaligenes bronchisepticus).